The following is a 1066-amino-acid chain: Thyrotropin-releasing hormone-degrading ectoenzyme (1066 aa).

The span at 1–14 (MALDGERGEQEEEK) shows a compositional bias: basic and acidic residues. Positions 1–43 (MALDGERGEQEEEKKKKKKKKKRKKKEEEGAEKSSSPFAATMG) are disordered. The Cytoplasmic segment spans residues 1 to 81 (MALDGERGEQ…ERHIAVHKRL (81 aa)). Residues 15-25 (KKKKKKKKRKK) are compositionally biased toward basic residues. At threonine 71 the chain carries Phosphothreonine; by PKC. Residues 82 to 102 (VLAFAVSIVALLAVTMLAVLL) form a helical; Signal-anchor for type II membrane protein membrane-spanning segment. The Extracellular portion of the chain corresponds to 103-1066 (SLRFDECGAS…FQWLGKAMRH (964 aa)). The interval 118–176 (TDGGLGGFPERDSNSSFPGSARRNHHAGGESSQRESGEVGTPGTPSAQPPSEEEREQWQ) is disordered. Asparagine 131, asparagine 202, asparagine 217, asparagine 264, and asparagine 380 each carry an N-linked (GlcNAc...) asparagine glycan. 446–450 (AAMEN) is a substrate binding site. Residue histidine 482 coordinates Zn(2+). Glutamate 483 acts as the Proton acceptor in catalysis. Zn(2+)-binding residues include histidine 486 and glutamate 505. 7 N-linked (GlcNAc...) asparagine glycosylation sites follow: asparagine 647, asparagine 676, asparagine 691, asparagine 705, asparagine 726, asparagine 842, and asparagine 948.

Belongs to the peptidase M1 family. In terms of assembly, homodimer; disulfide-linked. It depends on Zn(2+) as a cofactor.

It localises to the membrane. It catalyses the reaction Release of the N-terminal pyroglutamyl group from pGlu-|-His-Xaa tripeptides and pGlu-|-His-Xaa-Gly tetrapeptides.. Its function is as follows. Specific inactivation of TRH after its release. This chain is Thyrotropin-releasing hormone-degrading ectoenzyme (Trhde), found in Mus musculus (Mouse).